A 290-amino-acid chain; its full sequence is Dihydroorotate dehydrogenase B (NAD(+)), catalytic subunit (290 aa).

FMN is bound by residues serine 17 and 42–43 (KT). Residues lysine 42, 67-71 (NAIGL), and asparagine 117 each bind substrate. Asparagine 117 contributes to the FMN binding site. Serine 120 (nucleophile) is an active-site residue. 2 residues coordinate FMN: lysine 152 and isoleucine 177. Substrate is bound at residue 178–179 (NT). Residues glycine 203, 229 to 230 (GG), and 251 to 252 (GT) contribute to the FMN site.

The protein belongs to the dihydroorotate dehydrogenase family. Type 1 subfamily. In terms of assembly, heterotetramer of 2 PyrK and 2 PyrD type B subunits. The cofactor is FMN.

It is found in the cytoplasm. It catalyses the reaction (S)-dihydroorotate + NAD(+) = orotate + NADH + H(+). It functions in the pathway pyrimidine metabolism; UMP biosynthesis via de novo pathway; orotate from (S)-dihydroorotate (NAD(+) route): step 1/1. Its function is as follows. Catalyzes the conversion of dihydroorotate to orotate with NAD(+) as electron acceptor. This chain is Dihydroorotate dehydrogenase B (NAD(+)), catalytic subunit (pyrD), found in Saccharolobus solfataricus (strain ATCC 35092 / DSM 1617 / JCM 11322 / P2) (Sulfolobus solfataricus).